The chain runs to 943 residues: Isoleucine--tRNA ligase (943 aa).

The 'HIGH' region signature appears at 58–68; sequence PYANGKIHIGH. Glu567 is a binding site for L-isoleucyl-5'-AMP. Residues 608 to 612 carry the 'KMSKS' region motif; sequence KMSKS. Residue Lys611 participates in ATP binding. The Zn(2+) site is built by Cys906, Cys909, Cys926, and Cys929.

Belongs to the class-I aminoacyl-tRNA synthetase family. IleS type 1 subfamily. As to quaternary structure, monomer. Zn(2+) serves as cofactor.

It localises to the cytoplasm. The enzyme catalyses tRNA(Ile) + L-isoleucine + ATP = L-isoleucyl-tRNA(Ile) + AMP + diphosphate. Its function is as follows. Catalyzes the attachment of isoleucine to tRNA(Ile). As IleRS can inadvertently accommodate and process structurally similar amino acids such as valine, to avoid such errors it has two additional distinct tRNA(Ile)-dependent editing activities. One activity is designated as 'pretransfer' editing and involves the hydrolysis of activated Val-AMP. The other activity is designated 'posttransfer' editing and involves deacylation of mischarged Val-tRNA(Ile). This is Isoleucine--tRNA ligase from Pseudomonas putida (strain ATCC 47054 / DSM 6125 / CFBP 8728 / NCIMB 11950 / KT2440).